A 210-amino-acid chain; its full sequence is Lysine N-acyltransferase MbtK (210 aa).

Histidine 130 serves as a coordination point for substrate. The active-site Proton acceptor is aspartate 168.

This sequence belongs to the lysine N-acyltransferase MbtK family. As to quaternary structure, monomer.

It participates in siderophore biosynthesis; mycobactin biosynthesis. Functionally, acyltransferase required for the direct transfer of medium- to long-chain fatty acyl moieties from a carrier protein (MbtL) on to the epsilon-amino group of lysine residue in the mycobactin core. The sequence is that of Lysine N-acyltransferase MbtK (mbtK) from Mycobacterium tuberculosis (strain CDC 1551 / Oshkosh).